A 639-amino-acid polypeptide reads, in one-letter code: Poly(A)-specific ribonuclease PARN (639 aa).

Asp28 and Glu30 together coordinate a divalent metal cation. Ser163 and Ser167 each carry phosphoserine. The region spanning 178–245 (KKFIDQVVEK…ERYIVISKVD (68 aa)) is the R3H domain. Lys220 carries the N6-acetyllysine modification. A divalent metal cation contacts are provided by Asp292 and Asp382. Lys499 is subject to N6-acetyllysine. Position 530 is a phosphoserine (Ser530). Residue Ser557 is modified to Phosphoserine; by MAPKAPK2. Residues 563 to 611 (TVGKRNLSPSQEEAGLEDGVSGEISDTELEQTDSCAEPLSEGRKKAKKL) form a disordered region. Residues Ser583, Ser587, Ser619, Ser623, and Ser628 each carry the phosphoserine modification. Thr631 is subject to Phosphothreonine.

Belongs to the CAF1 family. In terms of assembly, homodimer. Found in a mRNA decay complex with RENT1, RENT2 and RENT3B. Interacts with KHSRP. Interacts with CELF1/CUGBP1. Interacts with ZC3HAV1 in an RNA-independent manner. Interacts with DHX36. Mg(2+) is required as a cofactor. Post-translationally, phosphorylation by MAPKAPK2, preventing GADD45A mRNA degradation after genotoxic stress.

Its subcellular location is the nucleus. The protein localises to the cytoplasm. The protein resides in the nucleolus. The catalysed reaction is Exonucleolytic cleavage of poly(A) to 5'-AMP.. 3'-exoribonuclease that has a preference for poly(A) tails of mRNAs, thereby efficiently degrading poly(A) tails. Exonucleolytic degradation of the poly(A) tail is often the first step in the decay of eukaryotic mRNAs and is also used to silence certain maternal mRNAs translationally during oocyte maturation and early embryonic development. Interacts with both the 3'-end poly(A) tail and the 5'-end cap structure during degradation, the interaction with the cap structure being required for an efficient degradation of poly(A) tails. Involved in nonsense-mediated mRNA decay, a critical process of selective degradation of mRNAs that contain premature stop codons. Also involved in degradation of inherently unstable mRNAs that contain AU-rich elements (AREs) in their 3'-UTR, possibly via its interaction with KHSRP. Probably mediates the removal of poly(A) tails of AREs mRNAs, which constitutes the first step of destabilization. Also able to recognize poly(A) tails of microRNAs such as MIR21 and H/ACA box snoRNAs (small nucleolar RNAs) leading to microRNAs degradation or snoRNA increased stability. In Pongo abelii (Sumatran orangutan), this protein is Poly(A)-specific ribonuclease PARN (PARN).